A 923-amino-acid polypeptide reads, in one-letter code: MSSGSTIVSSDKSGRTFKHEEELPKLPLPKLCDTLQRLKESLEPLYYADGYYQHPLDPEQIEKLSSIIRDFEENPVSEKLQSKLQSYHDTRDCYLDELHLDINNQTSTREIQDDVLPRNPFLVLADDALPNITQADRSAVLVHSAARFISALKQDLLPPDINATNGKPLSMAPFLNLFGTTRSPVFQRGEVENFDLNKPYTASDLEDPDYSSDEDDNDEPTQKDFDDRKRKHEEDIFTGNGITIKRHPDSKHILIISRGQYYTLEVLDSTNKIIYTAAELTTIFNHIIKDSSGIEKSTALGSLTSHSFRNWKYARKRLQKRYPNELHRIDSALFVLVLDESQEETTNDGDDTADISQMFNRTITERDKKCTSANCKRVFYGTSIINSKGHQVGSCVSRWYDKLQLVVTADAKATVIWDSFTCDGSVVLRFTSEIYTESVLRLARDVNAGDPQFSLWPNVTQMDPETKKLMTATISADGGGPSEIDPKLVVNKIDWSFSNILNTHVHLSETKLADLISKYDIVRASIPLGRRSAQRLGVKPDSMVQVALQIAHYALYGRMVFGLEPVSTRGFKNSRSSFINIQSQALLELCQLFISSSIDGTDKLDKFIQTCETHNNMVKHAKSGVGYEKHFNALKYLFKFHDHFGIHLSGDESSAAKDLFENPLVLPFSQPELIVANCGNAATTTFGITPAVPHGFGIGYIIKDDQVDLTVTSQFRQGDRLMFMLSWVLGEIRSYWRMSRGTSHNKTGVKISPVVDKLYEMDNAVNNPPKRNGHTVNGSRKTSSSSQVNLNRYGGFFDLEGHIDSRNISKTPSMKNLQKTFNGLTMSADNDHSSSAVSVPTEKEKLNTGHEILQIQPREVASNGLEADDETDIEIVAGNADGTSSSASSATSLNSKKRNVINSRFDIDFDRSRVGRKVATLDQ.

Over residues 1-11 the composition is skewed to polar residues; it reads MSSGSTIVSSD. 2 disordered regions span residues 1 to 21 and 197 to 232; these read MSSGSTIVSSDKSGRTFKHEE and NKPYTASDLEDPDYSSDEDDNDEPTQKDFDDRKRKH. Ser2 carries the post-translational modification N-acetylserine. A compositionally biased stretch (basic and acidic residues) spans 12–21; it reads KSGRTFKHEE. Positions 204–219 are enriched in acidic residues; the sequence is DLEDPDYSSDEDDNDE. A compositionally biased stretch (basic and acidic residues) spans 220-232; the sequence is PTQKDFDDRKRKH. CoA-binding positions include 529 to 541 and Ser567; that span reads GRRSAQRLGVKPD. (R)-carnitine is bound at residue Ser576. The tract at residues 763–787 is disordered; it reads NAVNNPPKRNGHTVNGSRKTSSSSQ. A compositionally biased stretch (polar residues) spans 774-787; that stretch reads HTVNGSRKTSSSSQ. The residue at position 783 (Ser783) is a Phosphoserine.

The protein belongs to the carnitine/choline acetyltransferase family.

It localises to the cytoplasm. It catalyses the reaction (R)-carnitine + acetyl-CoA = O-acetyl-(R)-carnitine + CoA. In terms of biological role, carnitine O-acetyltransferase involved in the shutteling of acetyl-CoA in the cell. The protein is Carnitine O-acetyltransferase YAT2 of Saccharomyces cerevisiae (strain ATCC 204508 / S288c) (Baker's yeast).